Here is a 100-residue protein sequence, read N- to C-terminus: Putative septation protein SpoVG (100 aa).

This sequence belongs to the SpoVG family.

Functionally, could be involved in septation. The chain is Putative septation protein SpoVG from Staphylococcus aureus (strain MRSA252).